We begin with the raw amino-acid sequence, 175 residues long: Transcription factor E (175 aa).

The region spanning 3–88 is the HTH TFE/IIEalpha-type domain; the sequence is ENPLIQQVLF…TWKPSLEKVP (86 aa).

It belongs to the TFE family. In terms of assembly, monomer. Interaction with RNA polymerase subunits RpoF and RpoE is necessary for Tfe stimulatory transcription activity. Able to interact with Tbp and RNA polymerase in the absence of DNA promoter. Interacts both with the preinitiation and elongation complexes.

Its function is as follows. Transcription factor that plays a role in the activation of archaeal genes transcribed by RNA polymerase. Facilitates transcription initiation by enhancing TATA-box recognition by TATA-box-binding protein (Tbp), and transcription factor B (Tfb) and RNA polymerase recruitment. Not absolutely required for transcription in vitro, but particularly important in cases where Tbp or Tfb function is not optimal. It dynamically alters the nucleic acid-binding properties of RNA polymerases by stabilizing the initiation complex and destabilizing elongation complexes. Seems to translocate with the RNA polymerase following initiation and acts by binding to the non template strand of the transcription bubble in elongation complexes. The protein is Transcription factor E of Methanococcus maripaludis (strain C7 / ATCC BAA-1331).